The chain runs to 1250 residues: Nucleoporin pom152 (1250 aa).

The interval 1–79 is pore side; sequence MVTRVASSER…IYLRLLPKFR (79 aa). Residues 80–100 traverse the membrane as a helical segment; sequence IPWLSFQPAATLLQIAIFAAI. Residues 101–1250 form a cisternal side region; the sequence is NLLLSSLSSL…PQDSTSSSNI (1150 aa).

Component of the nuclear pore complex (NPC). NPC constitutes the exclusive means of nucleocytoplasmic transport. NPCs allow the passive diffusion of ions and small molecules and the active, nuclear transport receptor-mediated bidirectional transport of macromolecules such as proteins, RNAs, ribonucleoparticles (RNPs), and ribosomal subunits across the nuclear envelope.

The protein localises to the nucleus. The protein resides in the nuclear pore complex. It localises to the nucleus membrane. In terms of biological role, functions as a component of the nuclear pore complex (NPC). NPC components, collectively referred to as nucleoporins (NUPs), can play the role of both NPC structural components and of docking or interaction partners for transiently associated nuclear transport factors. The protein is Nucleoporin pom152 (pom152) of Schizosaccharomyces pombe (strain 972 / ATCC 24843) (Fission yeast).